We begin with the raw amino-acid sequence, 436 residues long: Indole-3-acetyl-aspartic acid hydrolase (436 aa).

This sequence belongs to the peptidase M20 family. As to quaternary structure, monomer.

The catalysed reaction is (indol-3-yl)acetyl-L-aspartate + H2O = (indol-3-yl)acetate + L-aspartate. In terms of biological role, hydrolyzes indole-3-acetyl-aspartate (IAA-Asp) to indole-3-acetic acid (IAA). Shows an exclusively high substrate specificity for IAA-Asp. The polypeptide is Indole-3-acetyl-aspartic acid hydrolase (Enterobacter agglomerans (Erwinia herbicola)).